A 437-amino-acid chain; its full sequence is MKETPLSNCERRFLLRAIEEKKRLDGRQTYDYRNIRISFGTDYGCCIVELGKTRVLGQVSCELVSPKLNRATEGILFFNLELSQMAAPAFEPGRQSDLLVKLNRLLERCLRNSKCIDTESLCVVAGEKVWQIRVDLHLLNHDGNIIDAASIAAIVALCHFRRPDVSVQGEEVTLYTPEERDPVPLSIHHMPICVSFAFFQQGTYLLVDPNEREERVMDGLLVIAMNKHREICTIQSSGGIMLLKDQVFRCSKIAGVKVAEITELIQKALENDQRVRKEGGKFGFAESIANQRITAFKMEKAPIDTSNIEEKAEEIIAEAEPPPEVVSKPVLWTPGTAQIGEGIENSWGDLEDSEKEEEEEGGIDETVILDDTKMDTGEVSDIGSQGAPIVLSDSEEEEMIILEPEKSPKKIRAQTSANQKAPSKSQGKRRKKKRTAN.

Serine 65 is modified (phosphoserine). Lysine 297 carries the N6-acetyllysine; alternate modification. Lysine 297 participates in a covalent cross-link: Glycyl lysine isopeptide (Lys-Gly) (interchain with G-Cter in SUMO1); alternate. Lysine 297 participates in a covalent cross-link: Glycyl lysine isopeptide (Lys-Gly) (interchain with G-Cter in SUMO2); alternate. Residues serine 306 and serine 346 each carry the phosphoserine modification. The disordered stretch occupies residues 339–437 (IGEGIENSWG…KRRKKKRTAN (99 aa)). Acidic residues predominate over residues 349–363 (DLEDSEKEEEEEGGI). Residues serine 392, serine 394, and serine 407 each carry the phosphoserine modification. Over residues 413–425 (AQTSANQKAPSKS) the composition is skewed to polar residues. Basic residues predominate over residues 426–437 (QGKRRKKKRTAN).

Belongs to the RNase PH family. In terms of assembly, component of the RNA exosome core complex (Exo-9), composed of EXOSC1, EXOSC2, EXOSC3, EXOSC4, EXOSC5, EXOSC6, EXOSC7, EXOSC8 and EXOSC9; within the complex interacts with EXOSC3, EXOSC4, EXOSC5 and DIS3. The catalytically inactive RNA exosome core complex (Exo-9) associates with the catalytic subunit EXOSC10/RRP6. Exo-9 may associate with DIS3 to form the nucleolar exosome complex, or DIS3L to form the cytoplasmic exosome complex. Exo-9 is formed by a hexameric base ring consisting of the heterodimers EXOSC4-EXOSC9, EXOSC5-EXOSC8 and EXOSC6-EXOSC7, and a cap ring consisting of EXOSC1, EXOSC2 and EXOSC3. The RNA exosome complex associates with cofactors C1D/RRP47, MPHOSPH6/MPP6 and MTREX/MTR4. Interacts (via C-terminus region) with SETX (via N-terminus domain); the interaction enhances SETX sumoylation. Interacts with DIS3; the interaction is direct.

The protein resides in the cytoplasm. It is found in the nucleus. It localises to the nucleolus. Its subcellular location is the nucleoplasm. Non-catalytic component of the RNA exosome complex which has 3'-&gt;5' exoribonuclease activity and participates in a multitude of cellular RNA processing and degradation events. In the nucleus, the RNA exosome complex is involved in proper maturation of stable RNA species such as rRNA, snRNA and snoRNA, in the elimination of RNA processing by-products and non-coding 'pervasive' transcripts, such as antisense RNA species and promoter-upstream transcripts (PROMPTs), and of mRNAs with processing defects, thereby limiting or excluding their export to the cytoplasm. The RNA exosome may be involved in Ig class switch recombination (CSR) and/or Ig variable region somatic hypermutation (SHM) by targeting AICDA deamination activity to transcribed dsDNA substrates. In the cytoplasm, the RNA exosome complex is involved in general mRNA turnover and specifically degrades inherently unstable mRNAs containing AU-rich elements (AREs) within their 3' untranslated regions, and in RNA surveillance pathways, preventing translation of aberrant mRNAs. It seems to be involved in degradation of histone mRNA. The catalytic inactive RNA exosome core complex of 9 subunits (Exo-9) is proposed to play a pivotal role in the binding and presentation of RNA for ribonucleolysis, and to serve as a scaffold for the association with catalytic subunits and accessory proteins or complexes. EXOSC9 binds to ARE-containing RNAs. The sequence is that of Exosome complex component RRP45 (Exosc9) from Rattus norvegicus (Rat).